Reading from the N-terminus, the 1818-residue chain is Cytadherence high molecular weight protein 2 (1818 aa).

Coiled-coil stretches lie at residues 31-880 (LESA…KQRE), 919-1607 (ELKI…DNKH), 1644-1755 (HLFE…QAVQ), and 1786-1817 (LATQ…QKAA).

Phosphorylated mainly on serine residues.

Its function is as follows. Component of the cytoskeleton-like structure which stabilizes the shape of the wall-less Mycoplasma. This cytoskeleton-like network of accessory proteins containing HMW proteins 1 to 5 allows the proper anchoring of cytadhesin proteins in the mycoplasmal membrane at the attachment organelle. The polypeptide is Cytadherence high molecular weight protein 2 (hmw2) (Mycoplasma pneumoniae (strain ATCC 29342 / M129 / Subtype 1) (Mycoplasmoides pneumoniae)).